We begin with the raw amino-acid sequence, 116 residues long: Somatostatin (116 aa).

The first 24 residues, 1-24 (MLSCRLQCALALLSIALAVGTVSA), serve as a signal peptide directing secretion. A propeptide spanning residues 25–88 (APSDPRLRQF…QDEVRLELER (64 aa)) is cleaved from the precursor. Positions 60-82 (PSQTENEALESEDLSRGAEQDEV) are disordered. Basic and acidic residues predominate over residues 72–82 (DLSRGAEQDEV). Cysteines 105 and 116 form a disulfide.

This sequence belongs to the somatostatin family.

It is found in the secreted. Its function is as follows. Somatostatin inhibits the release of somatotropin. The protein is Somatostatin (SST) of Gallus gallus (Chicken).